A 365-amino-acid polypeptide reads, in one-letter code: Flagellar P-ring protein (365 aa).

The signal sequence occupies residues 1–19 (MFKALAGIVLALVATLAHA).

Belongs to the FlgI family. The basal body constitutes a major portion of the flagellar organelle and consists of four rings (L,P,S, and M) mounted on a central rod.

It is found in the periplasm. The protein resides in the bacterial flagellum basal body. Functionally, assembles around the rod to form the L-ring and probably protects the motor/basal body from shearing forces during rotation. The protein is Flagellar P-ring protein of Salmonella heidelberg (strain SL476).